A 606-amino-acid polypeptide reads, in one-letter code: MSQLSSTLKRYTESARFTDAPFTKSSYGTYTPSSYGTNLAASFLEKEKFGFKPSPPTSYLTRPRTYGPPSILDYDRGRPLLRPDVIGGGKRAESQTRGTERPSGSGLSGGSGFSYGVTTSSVSYLPVSARDQGVTLTQKKSNSQSDLARDFSSLQTSDSYRLDSGNLGRSPMLARTRKELCALQGLYQAASRSEYLADYLENYGRKASAPQVPTPTPPSRAPEVLSPTYRPSGRYSLWEKGKGQALVSSRSSSPGRDTMNSKSAQGLAGLRNLGNTCFMNSILQCLSNTRELRDYCLQRLYLRDLSHSSRAHTALMEEFAKLIQTIWTSSPNDVVSPSEFKTQIQRYAPRFVGYNQQDAQEFLRFLLDGLHNEVNRVIARPKSNTENLDHLPDDEKGRQMWRKYLEREDSRIGDLFVGQLKSSLTCTDCGYCSTVFDPFWDLSLPITKRGYPEVTLMDCMRLFTKEDVLDGDEKPTCCRCRARKRCIKKFSIQRFPKILVLHLKRFSESRIRTSKLTAFVNFPLRDLDLREFASENTNHAVYNLYAVSNHSGTTMGGHYTAYCRSPVTGEWHTFNDSSVSPMSSSQVRTSDAYLLFYELASPPSRM.

A necessary for interaction with MDM4 region spans residues 1–201 (MSQLSSTLKR…RSEYLADYLE (201 aa)). Disordered regions lie at residues 53-112 (PSPP…GGSG) and 207-228 (ASAPQVPTPTPPSRAPEVLSPT). The segment covering 90 to 100 (KRAESQTRGTE) has biased composition (basic and acidic residues). The 333-residue stretch at 268–600 (AGLRNLGNTC…DAYLLFYELA (333 aa)) folds into the USP domain. The active-site Nucleophile is C277. The necessary for interaction with MDM4 stretch occupies residues 404–504 (YLEREDSRIG…FPKILVLHLK (101 aa)). Zn(2+) is bound by residues C426, C429, C477, and C480. The active-site Proton acceptor is the H558.

Belongs to the peptidase C19 family. USP2 subfamily. In terms of assembly, homooligomer. Found in trimeric complex with MDM2 and MDM4 and USP2. Interacts with CCND1; the interaction is direct and promotes its stabilization by antagonizing ubiquitin-dependent degradation. Interacts (via N-terminus and C-terminus) with MDM2. Interacts with MDM4 and PER1. Interacts with KCNQ1; counteracts the NEDD4L-specific down-regulation of I(Ks) and restores plasma membrane localization of KCNQ1.

It localises to the cytoplasm. The protein localises to the perinuclear region. It catalyses the reaction Thiol-dependent hydrolysis of ester, thioester, amide, peptide and isopeptide bonds formed by the C-terminal Gly of ubiquitin (a 76-residue protein attached to proteins as an intracellular targeting signal).. Its activity is regulated as follows. Cleavage is inhibited by ubiquitin in a dosage-dependent manner. Cleavage is blocked by ubiquitin aldehyde. Hydrolase that deubiquitinates polyubiquitinated target proteins such as MDM2, MDM4 and CCND1. Possesses both ubiquitin-specific peptidase and isopeptidase activities. Deubiquitinates MDM2 without reversing MDM2-mediated p53/TP53 ubiquitination and thus indirectly promotes p53/TP53 degradation and limits p53 activity. Has no deubiquitinase activity against p53/TP53. Prevents MDM2-mediated degradation of MDM4. Plays a role in the G1/S cell-cycle progression in normal and cancer cells. Plays a role in the regulation of myogenic differentiation of embryonic muscle cells. Regulates the circadian clock by modulating its intrinsic circadian rhythm and its capacity to respond to external cues. Associates with clock proteins and deubiquitinates core clock component PER1 but does not affect its overall stability. Regulates the nucleocytoplasmic shuttling and nuclear retention of PER1 and its repressive role on the clock transcription factors CLOCK and BMAL1. The sequence is that of Ubiquitin carboxyl-terminal hydrolase 2 (USP2) from Bos taurus (Bovine).